The chain runs to 340 residues: Glycerol-3-phosphate dehydrogenase [NAD(P)+] (340 aa).

Residues Ser14, Phe15, Arg35, and Lys108 each contribute to the NADPH site. 2 residues coordinate sn-glycerol 3-phosphate: Lys108 and Gly136. NADPH is bound at residue Ala140. Positions 191, 244, 254, 255, and 256 each coordinate sn-glycerol 3-phosphate. The Proton acceptor role is filled by Lys191. Arg255 contacts NADPH. NADPH is bound at residue Glu281.

The protein belongs to the NAD-dependent glycerol-3-phosphate dehydrogenase family.

The protein localises to the cytoplasm. It catalyses the reaction sn-glycerol 3-phosphate + NAD(+) = dihydroxyacetone phosphate + NADH + H(+). It carries out the reaction sn-glycerol 3-phosphate + NADP(+) = dihydroxyacetone phosphate + NADPH + H(+). It functions in the pathway membrane lipid metabolism; glycerophospholipid metabolism. Catalyzes the reduction of the glycolytic intermediate dihydroxyacetone phosphate (DHAP) to sn-glycerol 3-phosphate (G3P), the key precursor for phospholipid synthesis. The sequence is that of Glycerol-3-phosphate dehydrogenase [NAD(P)+] from Pseudomonas aeruginosa (strain LESB58).